Reading from the N-terminus, the 253-residue chain is Uridine phosphorylase (253 aa).

Belongs to the PNP/UDP phosphorylase family. In terms of assembly, homohexamer.

The protein localises to the cytoplasm. It carries out the reaction uridine + phosphate = alpha-D-ribose 1-phosphate + uracil. It functions in the pathway pyrimidine metabolism; UMP biosynthesis via salvage pathway; uracil from uridine (phosphorylase route): step 1/1. Its function is as follows. Catalyzes the reversible phosphorylytic cleavage of uridine to uracil and ribose-1-phosphate. Shows weak activity towards deoxyuridine and thymidine. The produced molecules are then utilized as carbon and energy sources or in the rescue of pyrimidine bases for nucleotide synthesis. The sequence is that of Uridine phosphorylase from Escherichia coli (strain K12).